The sequence spans 78 residues: uncharacterized protein (78 aa).

2 helical membrane-spanning segments follow: residues 12-32 (LVSVMGMGMVFAFLLLLICVV) and 51-71 (GVGAAVPAGGALAAAIAVAVH).

Its subcellular location is the cell membrane. This is an uncharacterized protein from Treponema pallidum (strain Nichols).